We begin with the raw amino-acid sequence, 132 residues long: Small ribosomal subunit protein bS16 (132 aa).

Residues 82–107 (DSKVQSKKEHNANKVKKEVKKPEAKK) show a composition bias toward basic and acidic residues. A disordered region spans residues 82–132 (DSKVQSKKEHNANKVKKEVKKPEAKKAAASKPASKPSASKSASQKKTVSKK). The segment covering 108-132 (AAASKPASKPSASKSASQKKTVSKK) has biased composition (low complexity).

It belongs to the bacterial ribosomal protein bS16 family.

In Malacoplasma penetrans (strain HF-2) (Mycoplasma penetrans), this protein is Small ribosomal subunit protein bS16.